The primary structure comprises 147 residues: Mitochondrial import receptor subunit TOM20 homolog (147 aa).

The Mitochondrial intermembrane portion of the chain corresponds to Met1–Val3. A helical membrane pass occupies residues Val4–Phe26. Residues Asp27–Glu147 lie on the Cytoplasmic side of the membrane.

The protein belongs to the Tom20 family. Forms part of the preprotein translocase complex of the outer mitochondrial membrane (TOM complex). Interacts with tom22.

It is found in the mitochondrion outer membrane. In terms of biological role, central component of the receptor complex responsible for the recognition and translocation of cytosolically synthesized mitochondrial preproteins. Together with tom22 functions as the transit peptide receptor at the surface of the mitochondrion outer membrane and facilitates the movement of preproteins into the tom40 translocation pore. This Xenopus tropicalis (Western clawed frog) protein is Mitochondrial import receptor subunit TOM20 homolog (tomm20).